The primary structure comprises 252 residues: Chitooligosaccharide deacetylase (252 aa).

Mg(2+) is bound by residues His61 and His125.

This sequence belongs to the YdjC deacetylase family. ChbG subfamily. As to quaternary structure, homodimer. The cofactor is Mg(2+).

The protein resides in the cytoplasm. The enzyme catalyses N,N'-diacetylchitobiose + H2O = N-acetyl-beta-D-glucosaminyl-(1-&gt;4)-D-glucosamine + acetate. It carries out the reaction diacetylchitobiose-6'-phosphate + H2O = N'-monoacetylchitobiose-6'-phosphate + acetate. It functions in the pathway glycan degradation; chitin degradation. In terms of biological role, involved in the degradation of chitin. ChbG is essential for growth on the acetylated chitooligosaccharides chitobiose and chitotriose but is dispensable for growth on cellobiose and chitosan dimer, the deacetylated form of chitobiose. Deacetylation of chitobiose-6-P and chitotriose-6-P is necessary for both the activation of the chb promoter by the regulatory protein ChbR and the hydrolysis of phosphorylated beta-glucosides by the phospho-beta-glucosidase ChbF. Catalyzes the removal of only one acetyl group from chitobiose-6-P to yield monoacetylchitobiose-6-P, the inducer of ChbR and the substrate of ChbF. This chain is Chitooligosaccharide deacetylase, found in Klebsiella pneumoniae subsp. pneumoniae (strain ATCC 700721 / MGH 78578).